A 118-amino-acid polypeptide reads, in one-letter code: Putative membrane protein insertion efficiency factor (118 aa).

Belongs to the UPF0161 family.

Its subcellular location is the cell inner membrane. Could be involved in insertion of integral membrane proteins into the membrane. This chain is Putative membrane protein insertion efficiency factor, found in Helicobacter pylori (strain HPAG1).